The sequence spans 993 residues: Glycogen phosphorylase 2 (993 aa).

The disordered stretch occupies residues methionine 1 to glutamine 82. Positions arginine 19–tyrosine 48 are enriched in polar residues. Residues glutamate 58 to glutamate 77 show a composition bias toward low complexity. An N6-(pyridoxal phosphate)lysine modification is found at lysine 763. Residues valine 962–glycine 981 show a composition bias toward polar residues. Positions valine 962–asparagine 993 are disordered. Residues asparagine 983–asparagine 993 are compositionally biased toward gly residues.

It belongs to the glycogen phosphorylase family. Homodimer. Pyridoxal 5'-phosphate serves as cofactor. In terms of processing, the N-terminus is blocked. Enzyme activity requires processing of the 113 kDa peptide to an enzymatically active 106 kDa form of the protein. Processing would occur near the middle of the Gln-rich repetitive element.

It carries out the reaction [(1-&gt;4)-alpha-D-glucosyl](n) + phosphate = [(1-&gt;4)-alpha-D-glucosyl](n-1) + alpha-D-glucose 1-phosphate. Functionally, phosphorylase is an important allosteric enzyme in carbohydrate metabolism. Enzymes from different sources differ in their regulatory mechanisms and in their natural substrates. However, all known phosphorylases share catalytic and structural properties. The protein is Glycogen phosphorylase 2 (glpD) of Dictyostelium discoideum (Social amoeba).